We begin with the raw amino-acid sequence, 392 residues long: Succinate--CoA ligase [ADP-forming] subunit beta (392 aa).

The ATP-grasp domain maps to 9–247 (KAILRKYGVA…VTEEDPLEVE (239 aa)). ATP contacts are provided by residues lysine 49, 56–58 (GRG), glutamate 102, leucine 105, and glutamate 110. Residues asparagine 202 and aspartate 216 each coordinate Mg(2+). Substrate-binding positions include asparagine 267 and 324 to 326 (GIL).

This sequence belongs to the succinate/malate CoA ligase beta subunit family. Heterotetramer of two alpha and two beta subunits. The cofactor is Mg(2+).

It catalyses the reaction succinate + ATP + CoA = succinyl-CoA + ADP + phosphate. The catalysed reaction is GTP + succinate + CoA = succinyl-CoA + GDP + phosphate. It functions in the pathway carbohydrate metabolism; tricarboxylic acid cycle; succinate from succinyl-CoA (ligase route): step 1/1. Functionally, succinyl-CoA synthetase functions in the citric acid cycle (TCA), coupling the hydrolysis of succinyl-CoA to the synthesis of either ATP or GTP and thus represents the only step of substrate-level phosphorylation in the TCA. The beta subunit provides nucleotide specificity of the enzyme and binds the substrate succinate, while the binding sites for coenzyme A and phosphate are found in the alpha subunit. This chain is Succinate--CoA ligase [ADP-forming] subunit beta, found in Koribacter versatilis (strain Ellin345).